We begin with the raw amino-acid sequence, 191 residues long: Shikimate kinase (191 aa).

14-19 is an ATP binding site; that stretch reads GSGKST. Residue serine 18 participates in Mg(2+) binding. Aspartate 36, arginine 60, and glycine 82 together coordinate substrate. Residue arginine 120 coordinates ATP. Residue arginine 147 participates in substrate binding.

The protein belongs to the shikimate kinase family. As to quaternary structure, monomer. Mg(2+) is required as a cofactor.

Its subcellular location is the cytoplasm. It catalyses the reaction shikimate + ATP = 3-phosphoshikimate + ADP + H(+). It participates in metabolic intermediate biosynthesis; chorismate biosynthesis; chorismate from D-erythrose 4-phosphate and phosphoenolpyruvate: step 5/7. Functionally, catalyzes the specific phosphorylation of the 3-hydroxyl group of shikimic acid using ATP as a cosubstrate. The polypeptide is Shikimate kinase (Chlorobaculum tepidum (strain ATCC 49652 / DSM 12025 / NBRC 103806 / TLS) (Chlorobium tepidum)).